Reading from the N-terminus, the 218-residue chain is uncharacterized protein (218 aa).

The disordered stretch occupies residues 1–24 (MAAQPQAPSAGGRPRAGKAVKSVA). In terms of domain architecture, HTH tetR-type spans 28-88 (KLSRESIVEG…AVRIRVIDDI (61 aa)). Residues 51 to 70 (TINALATQLGTKGPSLYNHV) constitute a DNA-binding region (H-T-H motif). Position 57 is a phosphothreonine; by PknH (Thr57).

In terms of processing, phosphorylated on Thr-57 by PknH.

This is an uncharacterized protein from Mycobacterium tuberculosis (strain ATCC 25618 / H37Rv).